Here is a 270-residue protein sequence, read N- to C-terminus: MSTHSSISQPPLPLAGRVAIVTGSSRGIGRAIAIHLAELGARIVINYTSKAADAERVASEINDFPVREEITGKGPRAIVVQANVSEPSQVKSMFDAAESAFEAPVHILVNSAGILDPKYPTIADTSVEDFDHTFSVNTKGAFLCSKEAANRLKQGGGGRIILLTSSQTRSLKPGFGAYAASKAAVETMVKILAKELKGTGITANCVAPGPIATEMFFDGKTPELVEKIAAESPFGRVGEAKDVVPLVGFLAGDGGEWVNGQIIPVNGGYV.

The transit peptide at 1-53 (MSTHSSISQPPLPLAGRVAIVTGSSRGIGRAIAIHLAELGARIVINYTSKAAD) directs the protein to the chloroplast. 26-50 (RGIGRAIAIHLAELGARIVINYTSK) provides a ligand contact to NADP(+). A substrate-binding site is contributed by Ser-165. Tyr-178 (proton acceptor) is an active-site residue.

The protein belongs to the short-chain dehydrogenases/reductases (SDR) family.

The protein localises to the plastid. It is found in the chloroplast. Aldehyde reductase that catalyzes the reduction of the aldehyde carbonyl groups on saturated and alpha,beta-unsaturated aldehydes with more than 5 carbons. The chain is NADPH-dependent aldehyde reductase-like protein, chloroplastic from Arabidopsis thaliana (Mouse-ear cress).